Reading from the N-terminus, the 356-residue chain is Chorismate synthase (356 aa).

NADP(+) is bound by residues R44 and R49. Residues 121–123, G278, 293–297, and R320 contribute to the FMN site; these read HFS and KPTPS.

Belongs to the chorismate synthase family. Requires FMNH2 as cofactor.

The enzyme catalyses 5-O-(1-carboxyvinyl)-3-phosphoshikimate = chorismate + phosphate. The protein operates within metabolic intermediate biosynthesis; chorismate biosynthesis; chorismate from D-erythrose 4-phosphate and phosphoenolpyruvate: step 7/7. Functionally, catalyzes the anti-1,4-elimination of the C-3 phosphate and the C-6 proR hydrogen from 5-enolpyruvylshikimate-3-phosphate (EPSP) to yield chorismate, which is the branch point compound that serves as the starting substrate for the three terminal pathways of aromatic amino acid biosynthesis. This reaction introduces a second double bond into the aromatic ring system. The protein is Chorismate synthase of Thermococcus gammatolerans (strain DSM 15229 / JCM 11827 / EJ3).